A 169-amino-acid chain; its full sequence is PTS system glucose-specific EIIA component (169 aa).

One can recognise a PTS EIIA type-1 domain in the interval 39-143 (DVVFAEKIVG…STLTPVVISN (105 aa)). Zn(2+) contacts are provided by His76 and His91. The active-site Tele-phosphohistidine intermediate; for EIIA activity is the His91. Residue His91 is modified to Phosphohistidine; by HPr.

In terms of assembly, heterodimer with glycerol kinase (glpk). Zn(2+) is required as a cofactor.

The protein localises to the cytoplasm. In terms of biological role, the phosphoenolpyruvate-dependent sugar phosphotransferase system (sugar PTS), a major carbohydrate active transport system, catalyzes the phosphorylation of incoming sugar substrates concomitantly with their translocation across the cell membrane. The enzyme II complex composed of PtsG and Crr is involved in glucose transport. The sequence is that of PTS system glucose-specific EIIA component (crr) from Escherichia coli O6:H1 (strain CFT073 / ATCC 700928 / UPEC).